Reading from the N-terminus, the 37-residue chain is Large ribosomal subunit protein bL36 (37 aa).

The protein belongs to the bacterial ribosomal protein bL36 family.

The protein is Large ribosomal subunit protein bL36 of Francisella tularensis subsp. mediasiatica (strain FSC147).